A 155-amino-acid chain; its full sequence is Small ribosomal subunit protein uS7 (155 aa).

Belongs to the universal ribosomal protein uS7 family. As to quaternary structure, part of the 30S ribosomal subunit. Contacts proteins S9 and S11.

Its function is as follows. One of the primary rRNA binding proteins, it binds directly to 16S rRNA where it nucleates assembly of the head domain of the 30S subunit. Is located at the subunit interface close to the decoding center, probably blocks exit of the E-site tRNA. The polypeptide is Small ribosomal subunit protein uS7 (Corynebacterium efficiens (strain DSM 44549 / YS-314 / AJ 12310 / JCM 11189 / NBRC 100395)).